A 129-amino-acid chain; its full sequence is Ergosterol biosynthetic protein 28 (129 aa).

The next 4 helical transmembrane spans lie at 4 to 24 (LGYWLMVVGSLRLASVWFGFF), 46 to 66 (TFGVWTLLTCTLCFLCAFNLE), 71 to 91 (YLATFLSFIYALGHFLTEYLF), and 96 to 116 (TIANLSTVGFFAGTSIVWMLL).

Belongs to the ERG28 family.

Its subcellular location is the endoplasmic reticulum membrane. The protein is Ergosterol biosynthetic protein 28 of Arabidopsis thaliana (Mouse-ear cress).